Here is a 313-residue protein sequence, read N- to C-terminus: 4-hydroxy-3-methylbut-2-enyl diphosphate reductase (313 aa).

Cys-12 provides a ligand contact to [4Fe-4S] cluster. (2E)-4-hydroxy-3-methylbut-2-enyl diphosphate contacts are provided by His-41 and His-74. Dimethylallyl diphosphate contacts are provided by His-41 and His-74. Positions 41 and 74 each coordinate isopentenyl diphosphate. Cys-96 is a binding site for [4Fe-4S] cluster. His-124 is a binding site for (2E)-4-hydroxy-3-methylbut-2-enyl diphosphate. Position 124 (His-124) interacts with dimethylallyl diphosphate. Residue His-124 participates in isopentenyl diphosphate binding. Glu-126 serves as the catalytic Proton donor. (2E)-4-hydroxy-3-methylbut-2-enyl diphosphate is bound at residue Thr-167. Cys-197 contributes to the [4Fe-4S] cluster binding site. Residues Ser-225, Ser-226, Asn-227, and Ser-269 each contribute to the (2E)-4-hydroxy-3-methylbut-2-enyl diphosphate site. 4 residues coordinate dimethylallyl diphosphate: Ser-225, Ser-226, Asn-227, and Ser-269. Isopentenyl diphosphate contacts are provided by Ser-225, Ser-226, Asn-227, and Ser-269.

Belongs to the IspH family. [4Fe-4S] cluster serves as cofactor.

The catalysed reaction is isopentenyl diphosphate + 2 oxidized [2Fe-2S]-[ferredoxin] + H2O = (2E)-4-hydroxy-3-methylbut-2-enyl diphosphate + 2 reduced [2Fe-2S]-[ferredoxin] + 2 H(+). It catalyses the reaction dimethylallyl diphosphate + 2 oxidized [2Fe-2S]-[ferredoxin] + H2O = (2E)-4-hydroxy-3-methylbut-2-enyl diphosphate + 2 reduced [2Fe-2S]-[ferredoxin] + 2 H(+). The protein operates within isoprenoid biosynthesis; dimethylallyl diphosphate biosynthesis; dimethylallyl diphosphate from (2E)-4-hydroxy-3-methylbutenyl diphosphate: step 1/1. Its pathway is isoprenoid biosynthesis; isopentenyl diphosphate biosynthesis via DXP pathway; isopentenyl diphosphate from 1-deoxy-D-xylulose 5-phosphate: step 6/6. Catalyzes the conversion of 1-hydroxy-2-methyl-2-(E)-butenyl 4-diphosphate (HMBPP) into a mixture of isopentenyl diphosphate (IPP) and dimethylallyl diphosphate (DMAPP). Acts in the terminal step of the DOXP/MEP pathway for isoprenoid precursor biosynthesis. This Methylococcus capsulatus (strain ATCC 33009 / NCIMB 11132 / Bath) protein is 4-hydroxy-3-methylbut-2-enyl diphosphate reductase.